We begin with the raw amino-acid sequence, 343 residues long: Tetraacyldisaccharide 4'-kinase (343 aa).

51–58 (TVGGAGKT) contacts ATP.

It belongs to the LpxK family.

It catalyses the reaction a lipid A disaccharide + ATP = a lipid IVA + ADP + H(+). It functions in the pathway glycolipid biosynthesis; lipid IV(A) biosynthesis; lipid IV(A) from (3R)-3-hydroxytetradecanoyl-[acyl-carrier-protein] and UDP-N-acetyl-alpha-D-glucosamine: step 6/6. In terms of biological role, transfers the gamma-phosphate of ATP to the 4'-position of a tetraacyldisaccharide 1-phosphate intermediate (termed DS-1-P) to form tetraacyldisaccharide 1,4'-bis-phosphate (lipid IVA). The chain is Tetraacyldisaccharide 4'-kinase from Xanthobacter autotrophicus (strain ATCC BAA-1158 / Py2).